Here is a 366-residue protein sequence, read N- to C-terminus: Chorismate synthase (366 aa).

Positions 48 and 54 each coordinate NADP(+). Residues 132-134, 244-245, Gly-289, 304-308, and Arg-330 each bind FMN; these read RSS, NA, and KPTSS.

The protein belongs to the chorismate synthase family. In terms of assembly, homotetramer. FMNH2 serves as cofactor.

The catalysed reaction is 5-O-(1-carboxyvinyl)-3-phosphoshikimate = chorismate + phosphate. It functions in the pathway metabolic intermediate biosynthesis; chorismate biosynthesis; chorismate from D-erythrose 4-phosphate and phosphoenolpyruvate: step 7/7. Catalyzes the anti-1,4-elimination of the C-3 phosphate and the C-6 proR hydrogen from 5-enolpyruvylshikimate-3-phosphate (EPSP) to yield chorismate, which is the branch point compound that serves as the starting substrate for the three terminal pathways of aromatic amino acid biosynthesis. This reaction introduces a second double bond into the aromatic ring system. The chain is Chorismate synthase from Methylobacterium radiotolerans (strain ATCC 27329 / DSM 1819 / JCM 2831 / NBRC 15690 / NCIMB 10815 / 0-1).